Reading from the N-terminus, the 387-residue chain is Cytochrome b (387 aa).

8 helical membrane-spanning segments follow: residues 32 to 52 (FGFF…LLAM), 76 to 98 (WLLR…VHML), 113 to 133 (LWVS…LGYV), 179 to 199 (FFSL…LHII), 225 to 245 (FTIK…AFVF), 290 to 310 (LGVL…FLTI), 325 to 345 (LFWS…QPAA), and 353 to 373 (LYST…IYMV). Positions 82 and 96 each coordinate heme b. Heme b is bound by residues H183 and H197.

Belongs to the cytochrome b family. As to quaternary structure, the main subunits of complex b-c1 are: cytochrome b, cytochrome c1 and the Rieske protein. Heme b serves as cofactor.

The protein resides in the mitochondrion inner membrane. Component of the ubiquinol-cytochrome c reductase complex (complex III or cytochrome b-c1 complex) that is part of the mitochondrial respiratory chain. The b-c1 complex mediates electron transfer from ubiquinol to cytochrome c. Contributes to the generation of a proton gradient across the mitochondrial membrane that is then used for ATP synthesis. This Dictyostelium citrinum (Slime mold) protein is Cytochrome b (cytB).